The chain runs to 428 residues: Trigger factor (428 aa).

The region spanning Lys163–Pro248 is the PPIase FKBP-type domain.

The protein belongs to the FKBP-type PPIase family. Tig subfamily.

It is found in the cytoplasm. The catalysed reaction is [protein]-peptidylproline (omega=180) = [protein]-peptidylproline (omega=0). Functionally, involved in protein export. Acts as a chaperone by maintaining the newly synthesized protein in an open conformation. Functions as a peptidyl-prolyl cis-trans isomerase. This Lachnoclostridium phytofermentans (strain ATCC 700394 / DSM 18823 / ISDg) (Clostridium phytofermentans) protein is Trigger factor.